Here is a 494-residue protein sequence, read N- to C-terminus: Probable cytosol aminopeptidase (494 aa).

Mn(2+) is bound by residues Lys-260 and Asp-265. The active site involves Lys-272. Residues Asp-283, Asp-342, and Glu-344 each contribute to the Mn(2+) site. Arg-346 is an active-site residue.

Belongs to the peptidase M17 family. Requires Mn(2+) as cofactor.

The protein localises to the cytoplasm. The enzyme catalyses Release of an N-terminal amino acid, Xaa-|-Yaa-, in which Xaa is preferably Leu, but may be other amino acids including Pro although not Arg or Lys, and Yaa may be Pro. Amino acid amides and methyl esters are also readily hydrolyzed, but rates on arylamides are exceedingly low.. It carries out the reaction Release of an N-terminal amino acid, preferentially leucine, but not glutamic or aspartic acids.. In terms of biological role, presumably involved in the processing and regular turnover of intracellular proteins. Catalyzes the removal of unsubstituted N-terminal amino acids from various peptides. This Bacillus cereus (strain ZK / E33L) protein is Probable cytosol aminopeptidase.